We begin with the raw amino-acid sequence, 202 residues long: 3-isopropylmalate dehydratase small subunit (202 aa).

This sequence belongs to the LeuD family. LeuD type 1 subfamily. In terms of assembly, heterodimer of LeuC and LeuD.

It catalyses the reaction (2R,3S)-3-isopropylmalate = (2S)-2-isopropylmalate. It participates in amino-acid biosynthesis; L-leucine biosynthesis; L-leucine from 3-methyl-2-oxobutanoate: step 2/4. Catalyzes the isomerization between 2-isopropylmalate and 3-isopropylmalate, via the formation of 2-isopropylmaleate. The polypeptide is 3-isopropylmalate dehydratase small subunit (Buchnera aphidicola subsp. Pemphigus spyrothecae).